The chain runs to 418 residues: Serpin H1 (418 aa).

Residues 1–18 (MRALLLISTICLLARALA) form the signal peptide. Lys-94 is subject to N6-succinyllysine. Residues Asn-120 and Asn-125 are each glycosylated (N-linked (GlcNAc...) asparagine). Ser-141 carries the post-translational modification Phosphoserine. The residue at position 207 (Lys-207) is an N6-acetyllysine. An N6-succinyllysine modification is found at Lys-296. Lys-319 is modified (N6-acetyllysine). The Prevents secretion from ER motif lies at 415–418 (RDEL).

The protein belongs to the serpin family.

The protein resides in the endoplasmic reticulum lumen. In terms of biological role, binds specifically to collagen. Could be involved as a chaperone in the biosynthetic pathway of collagen. The polypeptide is Serpin H1 (SERPINH1) (Bos taurus (Bovine)).